The sequence spans 1088 residues: Exportin-T (1088 aa).

A compositionally biased stretch (low complexity) spans 435-503 (KNNNNKNKNT…VKNANNIKNN (69 aa)). Disordered regions lie at residues 435-513 (KNNN…DDDD) and 1059-1088 (LNNN…KNGH).

Belongs to the exportin family.

The protein localises to the nucleus. The protein resides in the cytoplasm. In terms of biological role, mediates the nuclear export of aminoacylated tRNAs. In Dictyostelium discoideum (Social amoeba), this protein is Exportin-T (xpot).